A 469-amino-acid polypeptide reads, in one-letter code: 3-isopropylmalate dehydratase large subunit (469 aa).

[4Fe-4S] cluster contacts are provided by Cys-349, Cys-409, and Cys-412.

This sequence belongs to the aconitase/IPM isomerase family. LeuC type 1 subfamily. In terms of assembly, heterodimer of LeuC and LeuD. The cofactor is [4Fe-4S] cluster.

It catalyses the reaction (2R,3S)-3-isopropylmalate = (2S)-2-isopropylmalate. It functions in the pathway amino-acid biosynthesis; L-leucine biosynthesis; L-leucine from 3-methyl-2-oxobutanoate: step 2/4. In terms of biological role, catalyzes the isomerization between 2-isopropylmalate and 3-isopropylmalate, via the formation of 2-isopropylmaleate. This is 3-isopropylmalate dehydratase large subunit from Methylorubrum populi (strain ATCC BAA-705 / NCIMB 13946 / BJ001) (Methylobacterium populi).